A 190-amino-acid chain; its full sequence is Orotate phosphoribosyltransferase (190 aa).

114–122 provides a ligand contact to 5-phospho-alpha-D-ribose 1-diphosphate; it reads EDVVTTGGS. Orotate-binding residues include T118 and R146.

Belongs to the purine/pyrimidine phosphoribosyltransferase family. PyrE subfamily. Homodimer. It depends on Mg(2+) as a cofactor.

The catalysed reaction is orotidine 5'-phosphate + diphosphate = orotate + 5-phospho-alpha-D-ribose 1-diphosphate. Its pathway is pyrimidine metabolism; UMP biosynthesis via de novo pathway; UMP from orotate: step 1/2. In terms of biological role, catalyzes the transfer of a ribosyl phosphate group from 5-phosphoribose 1-diphosphate to orotate, leading to the formation of orotidine monophosphate (OMP). The protein is Orotate phosphoribosyltransferase of Caldanaerobacter subterraneus subsp. tengcongensis (strain DSM 15242 / JCM 11007 / NBRC 100824 / MB4) (Thermoanaerobacter tengcongensis).